A 76-amino-acid polypeptide reads, in one-letter code: Esculentin-2-ALb (76 aa).

Residues 1–22 (MFTMKKSLLLLFFLGTISLSLC) form the signal peptide. Residues 23 to 39 (EEERSADEDDGEKGVKR) constitute a propeptide that is removed on maturation. Cysteines 70 and 76 form a disulfide.

As to expression, expressed by the skin glands.

The protein resides in the secreted. In terms of biological role, antimicrobial peptide with activity against Gram-positive and Gram-negative bacteria and against fungi. Has been tested against S.aureus (MIC=1.25 ug/mL), B.pumilus (MIC=2.5 ug/mL), B.cereus (MIC=7.5 ug/mL), E.coli (MIC=12.5 ug/mL), B.dysenteriae (MIC=7.5 ug/mL), A.cacoaceticus (MIC=12.5 ug/mL), P.aeruginosa (MIC=50.0 ug/mL) and C.albicans (MIC=2.5 ug/mL). Also shows a weak hemolytic activity. The protein is Esculentin-2-ALb of Amolops loloensis (Lolokou Sucker Frog).